The chain runs to 157 residues: Small ribosomal subunit protein uS7 (157 aa).

This sequence belongs to the universal ribosomal protein uS7 family. In terms of assembly, part of the 30S ribosomal subunit. Contacts proteins S9 and S11.

Functionally, one of the primary rRNA binding proteins, it binds directly to 16S rRNA where it nucleates assembly of the head domain of the 30S subunit. Is located at the subunit interface close to the decoding center, probably blocks exit of the E-site tRNA. This Borrelia duttonii (strain Ly) protein is Small ribosomal subunit protein uS7.